A 188-amino-acid polypeptide reads, in one-letter code: Dual specificity protein phosphatase 18 (188 aa).

The Tyrosine-protein phosphatase domain maps to 19-160; that stretch reads GLSQITKSLY…LIHYEFQLFG (142 aa). The sufficient for mitochondrial localization stretch occupies residues 95–141; it reads MKQGRTLLHCAAGVSRSAALCLAYLMKYHAMSLLDAHTWTKSCRPII. The Phosphocysteine intermediate role is filled by Cys104.

Belongs to the protein-tyrosine phosphatase family. Non-receptor class dual specificity subfamily.

It localises to the cytoplasm. Its subcellular location is the nucleus. The protein resides in the mitochondrion inner membrane. The enzyme catalyses O-phospho-L-tyrosyl-[protein] + H2O = L-tyrosyl-[protein] + phosphate. It catalyses the reaction O-phospho-L-seryl-[protein] + H2O = L-seryl-[protein] + phosphate. The catalysed reaction is O-phospho-L-threonyl-[protein] + H2O = L-threonyl-[protein] + phosphate. Functionally, can dephosphorylate single and diphosphorylated synthetic MAPK peptides, with preference for the phosphotyrosine and diphosphorylated forms over phosphothreonine. In vitro, dephosphorylates p-nitrophenyl phosphate (pNPP). The sequence is that of Dual specificity protein phosphatase 18 (DUSP18) from Pongo abelii (Sumatran orangutan).